The following is a 530-amino-acid chain: Membrane-associated transporter protein (530 aa).

Over 1–46 (MGSNSGQAGRHIYKSLADDGPFDSVEPPKRPTSRLIMHSMAMFGRE) the chain is Cytoplasmic. Residues 47–67 (FCYAVEAAYVTPVLLSVGLPS) form a helical membrane-spanning segment. A topological domain (extracellular) is located at residue Ser68. A helical membrane pass occupies residues 69–89 (LYSIVWFLSPILGFLLQPVVG). The Cytoplasmic segment spans residues 90–110 (SASDHCRSRWGRRRPYILTLG). The helical transmembrane segment at 111 to 131 (VMMLVGMALYLNGATVVAALI) threads the bilayer. At 132–138 (ANPRRKL) the chain is on the extracellular side. A helical membrane pass occupies residues 139 to 159 (VWAISVTMIGVVLFDFAADFI). Residues 160-184 (DGPIKAYLFDVCSHQDKEKGLHYHA) are Cytoplasmic-facing. A helical membrane pass occupies residues 185–205 (LFTGFGGALGYLLGAIDWAHL). The Extracellular portion of the chain corresponds to 206–216 (ELGRLLGTEFQ). Residues 217–237 (VMFFFSALVLTLCFTVHLCSI) form a helical membrane-spanning segment. Residues 238–318 (SEAPLTEVAK…ALVNMPPHYR (81 aa)) lie on the Cytoplasmic side of the membrane. Residues 319–339 (YLCISHLIGWTAFLSNMLFFT) form a helical membrane-spanning segment. At 340–366 (DFMGQIVYRGDPYSAHNSTEFLIYERG) the chain is on the extracellular side. A glycan (N-linked (GlcNAc...) asparagine) is linked at Asn356. Residues 367 to 387 (VEVGCWGLCINSVFSSLYSYF) form a helical membrane-spanning segment. Residues 388-398 (QKVLVSYIGLK) are Cytoplasmic-facing. A helical membrane pass occupies residues 399-419 (GLYFTGYLLFGLGTGFIGLFP). Residues 420–425 (NVYSTL) lie on the Extracellular side of the membrane. The chain crosses the membrane as a helical span at residues 426–446 (VLCSLFGVMSSTLYTVPFNLI). Residues 447–477 (TEYHREEEKERQQAPGGDPDNSVRGKGMDCA) lie on the Cytoplasmic side of the membrane. The helical transmembrane segment at 478–498 (TLTCMVQLAQILVGGGLGFLV) threads the bilayer. Topologically, residues 499-504 (NTAGTV) are extracellular. The chain crosses the membrane as a helical span at residues 505-525 (VVVVITASAVALIGCCFVALF). Residues 526–530 (VRYVD) lie on the Cytoplasmic side of the membrane.

The protein belongs to the glycoside-pentoside-hexuronide (GPH) cation symporter transporter (TC 2.A.2) family. As to quaternary structure, interacts with TYRP1. In terms of tissue distribution, expressed in mature melanocytes.

The protein localises to the melanosome membrane. The catalysed reaction is sucrose(out) + H(+)(out) = sucrose(in) + H(+)(in). It carries out the reaction D-glucose(out) + H(+)(out) = D-glucose(in) + H(+)(in). Its function is as follows. Proton-associated glucose and sucrose transporter. May be able to transport also fructose. Expressed at a late melanosome maturation stage where functions as proton/glucose exporter which increase lumenal pH by decreasing glycolysis. Regulates melanogenesis by maintaining melanosome neutralization that is initially initiated by transient OCA2 and required for a proper function of the tyrosinase TYR. The protein is Membrane-associated transporter protein of Homo sapiens (Human).